Here is a 228-residue protein sequence, read N- to C-terminus: Cytidylate kinase (228 aa).

12 to 20 (GPSGSGKGT) contributes to the ATP binding site.

The protein belongs to the cytidylate kinase family. Type 1 subfamily.

The protein localises to the cytoplasm. The catalysed reaction is CMP + ATP = CDP + ADP. It carries out the reaction dCMP + ATP = dCDP + ADP. The polypeptide is Cytidylate kinase (Pseudomonas putida (strain W619)).